The chain runs to 1205 residues: A disintegrin and metalloproteinase with thrombospondin motifs 3 (1205 aa).

The N-terminal stretch at 1–20 (MVLLSLWLIAAALVEVRTSA) is a signal peptide. A propeptide spanning residues 21–249 (DGQAGNEEMV…QLNETMRRRR (229 aa)) is cleaved from the precursor. Residues N83, N119, N242, and N345 are each glycosylated (N-linked (GlcNAc...) asparagine). The Peptidase M12B domain occupies 256 to 460 (YNIEVLLGVD…HSYDCLLDDP (205 aa)). Intrachain disulfides connect C333/C382, C376/C455, and C415/C441. H398 contacts Zn(2+). E399 is an active-site residue. Zn(2+) contacts are provided by H402 and H408. The region spanning 470 to 550 (ELPGINYSMD…MWKNANQQKQ (81 aa)) is the Disintegrin domain. N-linked (GlcNAc...) asparagine glycosylation is present at N475. 7 disulfides stabilise this stretch: C482–C507, C493–C516, C502–C535, C529–C540, C563–C600, C567–C605, and C578–C590. The TSP type-1 1 domain maps to 551–606 (DGNWGSWTKFGSCSRTCGTGVRFRTRQCNNPMPINGGQDCPGVNFEYQLCNTEECQ). The segment at 713 to 844 (RTVKGTFTRT…NSNNVIQEEL (132 aa)) is spacer. N-linked (GlcNAc...) asparagine glycosylation occurs at N814. 3 consecutive TSP type-1 domains span residues 845-905 (DTFE…QECT), 906-965 (HPLW…NRVP), and 966-1014 (CPAQ…QLPP). N-linked (GlcNAc...) asparagine glycosylation is present at N942. 3 disulfides stabilise this stretch: C978–C1010, C982–C1015, and C993–C999. The region spanning 1015 to 1054 (CNDEPCLGDKSIFCQMEVLARYCSIPGYNKLCCESCSKRS) is the PLAC domain. The tract at residues 1174 to 1205 (DSIGASSQARTSKKDGKIIDNRRPTRSSTLER) is disordered. Basic and acidic residues predominate over residues 1185–1205 (SKKDGKIIDNRRPTRSSTLER).

Requires Zn(2+) as cofactor. The precursor is cleaved by a furin endopeptidase. Post-translationally, glycosylated. Can be O-fucosylated by POFUT2 on a serine or a threonine residue found within the consensus sequence C1-X(2)-(S/T)-C2-G of the TSP type-1 repeat domains where C1 and C2 are the first and second cysteine residue of the repeat, respectively. Fucosylated repeats can then be further glycosylated by the addition of a beta-1,3-glucose residue by the glucosyltransferase, B3GALTL. Fucosylation mediates the efficient secretion of ADAMTS family members. Can also be C-glycosylated with one or two mannose molecules on tryptophan residues within the consensus sequence W-X-X-W of the TPRs, and N-glycosylated. These other glycosylations can also facilitate secretion. As to expression, found in cartilage and skin.

Its subcellular location is the secreted. The protein localises to the extracellular space. It localises to the extracellular matrix. In terms of biological role, cleaves the propeptides of type II collagen prior to fibril assembly. Does not act on types I and III collagens. The polypeptide is A disintegrin and metalloproteinase with thrombospondin motifs 3 (ADAMTS3) (Homo sapiens (Human)).